The following is a 660-amino-acid chain: Tripartite terminase subunit 3 (660 aa).

Residues 203–210 carry the Walker A motif motif; the sequence is VPRRHGKT. Positions 294-299 match the Walker B motif motif; sequence ILLVDE. E299 (for ATPase activity) is an active-site residue. Residues D452, E523, and D637 each act as for nuclease activity in the active site.

Belongs to the herpesviridae TRM3 protein family. In terms of assembly, interacts with the terminase subunits TRM1 and TRM2. Interacts with portal protein.

It is found in the host nucleus. Its function is as follows. Component of the molecular motor that translocates viral genomic DNA in empty capsid during DNA packaging. Forms a tripartite terminase complex together with TRM1 and TRM2 in the host cytoplasm. Once the complex reaches the host nucleus, it interacts with the capsid portal vertex. This portal forms a ring in which genomic DNA is translocated into the capsid. TRM3 carries an RNase H-like nuclease activity that plays an important role for the cleavage of concatemeric viral DNA into unit length genomes. This is Tripartite terminase subunit 3 from Elephas maximus (Indian elephant).